Here is a 222-residue protein sequence, read N- to C-terminus: Deoxyribose-phosphate aldolase (222 aa).

Residue Asp92 is the Proton donor/acceptor of the active site. The active-site Schiff-base intermediate with acetaldehyde is Lys156. The Proton donor/acceptor role is filled by Lys185.

It belongs to the DeoC/FbaB aldolase family. DeoC type 1 subfamily. In terms of assembly, homodimer.

It is found in the cytoplasm. The enzyme catalyses 2-deoxy-D-ribose 5-phosphate = D-glyceraldehyde 3-phosphate + acetaldehyde. The protein operates within carbohydrate degradation; 2-deoxy-D-ribose 1-phosphate degradation; D-glyceraldehyde 3-phosphate and acetaldehyde from 2-deoxy-alpha-D-ribose 1-phosphate: step 2/2. Shows high stability to high concentrations of acetaldehyde. Catalyzes a reversible aldol reaction between acetaldehyde and D-glyceraldehyde 3-phosphate to generate 2-deoxy-D-ribose 5-phosphate. The polypeptide is Deoxyribose-phosphate aldolase (Aciduliprofundum boonei (strain DSM 19572 / T469)).